The following is a 123-amino-acid chain: Large ribosomal subunit protein bL12 (123 aa).

The protein belongs to the bacterial ribosomal protein bL12 family. In terms of assembly, homodimer. Part of the ribosomal stalk of the 50S ribosomal subunit. Forms a multimeric L10(L12)X complex, where L10 forms an elongated spine to which 2 to 4 L12 dimers bind in a sequential fashion. Binds GTP-bound translation factors.

In terms of biological role, forms part of the ribosomal stalk which helps the ribosome interact with GTP-bound translation factors. Is thus essential for accurate translation. The protein is Large ribosomal subunit protein bL12 of Chlorobium phaeovibrioides (strain DSM 265 / 1930) (Prosthecochloris vibrioformis (strain DSM 265)).